A 107-amino-acid chain; its full sequence is UPF0122 protein EAT1b_2891 (107 aa).

It belongs to the UPF0122 family.

Functionally, might take part in the signal recognition particle (SRP) pathway. This is inferred from the conservation of its genetic proximity to ftsY/ffh. May be a regulatory protein. In Exiguobacterium sp. (strain ATCC BAA-1283 / AT1b), this protein is UPF0122 protein EAT1b_2891.